The following is a 252-amino-acid chain: Ribosomal RNA small subunit methyltransferase J (252 aa).

Residues 101-102 (RD), 117-118 (ER), 153-154 (SS), and aspartate 171 contribute to the S-adenosyl-L-methionine site.

Belongs to the methyltransferase superfamily. RsmJ family.

The protein resides in the cytoplasm. The enzyme catalyses guanosine(1516) in 16S rRNA + S-adenosyl-L-methionine = N(2)-methylguanosine(1516) in 16S rRNA + S-adenosyl-L-homocysteine + H(+). Its function is as follows. Specifically methylates the guanosine in position 1516 of 16S rRNA. This Salmonella dublin (strain CT_02021853) protein is Ribosomal RNA small subunit methyltransferase J.